Consider the following 134-residue polypeptide: Putative pre-16S rRNA nuclease (134 aa).

It belongs to the YqgF nuclease family.

It localises to the cytoplasm. Functionally, could be a nuclease involved in processing of the 5'-end of pre-16S rRNA. In Hydrogenovibrio crunogenus (strain DSM 25203 / XCL-2) (Thiomicrospira crunogena), this protein is Putative pre-16S rRNA nuclease.